Reading from the N-terminus, the 194-residue chain is CASP-like protein 2C2 (194 aa).

Residues Met1 to Ala27 lie on the Cytoplasmic side of the membrane. The helical transmembrane segment at Met28–Val48 threads the bilayer. Residues Gln49–Gln58 lie on the Extracellular side of the membrane. The helical transmembrane segment at Ala59–Ala79 threads the bilayer. The Cytoplasmic portion of the chain corresponds to Arg80–Ala113. The helical transmembrane segment at Tyr114–Val134 threads the bilayer. Topologically, residues Glu135 to Gln152 are extracellular. A helical transmembrane segment spans residues Ala153 to Phe173. The Cytoplasmic portion of the chain corresponds to Ser174 to Val194.

It belongs to the Casparian strip membrane proteins (CASP) family. Homodimer and heterodimers.

It is found in the cell membrane. This chain is CASP-like protein 2C2, found in Sorghum bicolor (Sorghum).